The chain runs to 346 residues: RNA-directed DNA methylation 4 (346 aa).

Methionine 1 carries the N-acetylmethionine modification. Composition is skewed to acidic residues over residues 253 to 268 (FCDG…EDSN), 278 to 312 (PEEE…DDEE), and 323 to 332 (GDDEFDDYAE). The disordered stretch occupies residues 253 to 346 (FCDGSDESDY…YSESDEEFES (94 aa)).

It belongs to the IWR1/SLC7A6OS family. In terms of assembly, interacts with NRPD1. Associates with Pol II and Pol V complexes.

Probable regulatory factor for several RNA polymerases. Effector involved in facilitation of Pol V transcription as RNA scaffold and recruitment of silencing complex to target genomic sites. The sequence is that of RNA-directed DNA methylation 4 (RDM4) from Arabidopsis thaliana (Mouse-ear cress).